Reading from the N-terminus, the 163-residue chain is Neurotrophin-3 (163 aa).

Positions 1–3 are cleaved as a signal peptide; it reads IQS. A propeptide spanning residues 4–119 is cleaved from the precursor; it reads TSMDQGILTE…VLNRTSRRKR (116 aa). A glycan (N-linked (GlcNAc...) asparagine) is linked at Asn-112. Positions 112 to 132 are disordered; that stretch reads NRTSRRKREGKSHRGEYSVCD. Over residues 123 to 132 the composition is skewed to basic and acidic residues; that stretch reads SHRGEYSVCD.

The protein belongs to the NGF-beta family.

It is found in the secreted. In terms of biological role, seems to promote the survival of visceral and proprioceptive sensory neurons. The sequence is that of Neurotrophin-3 (NTF3) from Exiliboa placata (Oaxacan dwarf boa).